The primary structure comprises 80 residues: Cell division protein ZapB (80 aa).

Residues 3–80 are a coiled coil; the sequence is FEVLEQLEAK…NLLGKMDDVE (78 aa).

The protein belongs to the ZapB family. As to quaternary structure, homodimer. The ends of the coiled-coil dimer bind to each other, forming polymers. Interacts with FtsZ.

The protein localises to the cytoplasm. Non-essential, abundant cell division factor that is required for proper Z-ring formation. It is recruited early to the divisome by direct interaction with FtsZ, stimulating Z-ring assembly and thereby promoting cell division earlier in the cell cycle. Its recruitment to the Z-ring requires functional FtsA or ZipA. The sequence is that of Cell division protein ZapB from Vibrio atlanticus (strain LGP32) (Vibrio splendidus (strain Mel32)).